A 115-amino-acid chain; its full sequence is Large ribosomal subunit protein bL19 (115 aa).

This sequence belongs to the bacterial ribosomal protein bL19 family.

Its function is as follows. This protein is located at the 30S-50S ribosomal subunit interface and may play a role in the structure and function of the aminoacyl-tRNA binding site. The chain is Large ribosomal subunit protein bL19 from Streptococcus mutans serotype c (strain ATCC 700610 / UA159).